A 149-amino-acid polypeptide reads, in one-letter code: Large ribosomal subunit protein eL24A (149 aa).

Composition is skewed to basic and acidic residues over residues 93-102 (KRNQRPEVRA) and 116-125 (KAASESEKKA). The disordered stretch occupies residues 93-149 (KRNQRPEVRAAARAAALKQRKDKKAASESEKKAIKAKSAASSARGQAIKNAKAAARH).

The protein belongs to the eukaryotic ribosomal protein eL24 family. In terms of assembly, component of the large ribosomal subunit (LSU). Mature yeast ribosomes consist of a small (40S) and a large (60S) subunit. The 40S small subunit contains 1 molecule of ribosomal RNA (18S rRNA) and at least 33 different proteins. The large 60S subunit contains 3 rRNA molecules (25S, 5.8S and 5S rRNA) and at least 46 different proteins.

It is found in the cytoplasm. Component of the ribosome, a large ribonucleoprotein complex responsible for the synthesis of proteins in the cell. The small ribosomal subunit (SSU) binds messenger RNAs (mRNAs) and translates the encoded message by selecting cognate aminoacyl-transfer RNA (tRNA) molecules. The large subunit (LSU) contains the ribosomal catalytic site termed the peptidyl transferase center (PTC), which catalyzes the formation of peptide bonds, thereby polymerizing the amino acids delivered by tRNAs into a polypeptide chain. The nascent polypeptides leave the ribosome through a tunnel in the LSU and interact with protein factors that function in enzymatic processing, targeting, and the membrane insertion of nascent chains at the exit of the ribosomal tunnel. The polypeptide is Large ribosomal subunit protein eL24A (rpl2401) (Schizosaccharomyces pombe (strain 972 / ATCC 24843) (Fission yeast)).